The following is a 213-amino-acid chain: Uracil phosphoribosyltransferase (213 aa).

Residues arginine 78, arginine 103, and 130–138 (DPMLATGGT) each bind 5-phospho-alpha-D-ribose 1-diphosphate. Uracil contacts are provided by residues isoleucine 197 and 202–204 (GDA). Aspartate 203 contacts 5-phospho-alpha-D-ribose 1-diphosphate.

The protein belongs to the UPRTase family. The cofactor is Mg(2+).

The enzyme catalyses UMP + diphosphate = 5-phospho-alpha-D-ribose 1-diphosphate + uracil. It functions in the pathway pyrimidine metabolism; UMP biosynthesis via salvage pathway; UMP from uracil: step 1/1. With respect to regulation, allosterically activated by GTP. Its function is as follows. Catalyzes the conversion of uracil and 5-phospho-alpha-D-ribose 1-diphosphate (PRPP) to UMP and diphosphate. The chain is Uracil phosphoribosyltransferase from Nocardioides sp. (strain ATCC BAA-499 / JS614).